Here is a 277-residue protein sequence, read N- to C-terminus: Large ribosomal subunit protein uL2 (277 aa).

The interval 211-277 (SRWKGVRPTV…KLIVRGRKKK (67 aa)) is disordered.

Belongs to the universal ribosomal protein uL2 family. As to quaternary structure, part of the 50S ribosomal subunit. Forms a bridge to the 30S subunit in the 70S ribosome.

Its function is as follows. One of the primary rRNA binding proteins. Required for association of the 30S and 50S subunits to form the 70S ribosome, for tRNA binding and peptide bond formation. It has been suggested to have peptidyltransferase activity; this is somewhat controversial. Makes several contacts with the 16S rRNA in the 70S ribosome. The sequence is that of Large ribosomal subunit protein uL2 from Staphylococcus epidermidis (strain ATCC 35984 / DSM 28319 / BCRC 17069 / CCUG 31568 / BM 3577 / RP62A).